We begin with the raw amino-acid sequence, 262 residues long: Adenosylcobinamide-GDP ribazoletransferase (262 aa).

The next 8 membrane-spanning stretches (helical) occupy residues Ala-4–Arg-21, Ala-37–Ser-57, Leu-62–Leu-82, Val-112–Phe-132, Ile-141–Tyr-161, Tyr-181–His-201, Phe-202–Ala-222, and Asp-236–Leu-256.

This sequence belongs to the CobS family. Mg(2+) is required as a cofactor.

The protein resides in the cell membrane. The enzyme catalyses alpha-ribazole + adenosylcob(III)inamide-GDP = adenosylcob(III)alamin + GMP + H(+). The catalysed reaction is alpha-ribazole 5'-phosphate + adenosylcob(III)inamide-GDP = adenosylcob(III)alamin 5'-phosphate + GMP + H(+). It participates in cofactor biosynthesis; adenosylcobalamin biosynthesis; adenosylcobalamin from cob(II)yrinate a,c-diamide: step 7/7. Functionally, joins adenosylcobinamide-GDP and alpha-ribazole to generate adenosylcobalamin (Ado-cobalamin). Also synthesizes adenosylcobalamin 5'-phosphate from adenosylcobinamide-GDP and alpha-ribazole 5'-phosphate. This is Adenosylcobinamide-GDP ribazoletransferase from Geobacillus sp. (strain WCH70).